A 209-amino-acid polypeptide reads, in one-letter code: Large ribosomal subunit protein uL3 (209 aa).

A disordered region spans residues 127–151; that stretch reads SGGPSSHGSKFHRHLGGTGQATTPA.

It belongs to the universal ribosomal protein uL3 family. In terms of assembly, part of the 50S ribosomal subunit. Forms a cluster with proteins L14 and L19.

Its function is as follows. One of the primary rRNA binding proteins, it binds directly near the 3'-end of the 23S rRNA, where it nucleates assembly of the 50S subunit. The sequence is that of Large ribosomal subunit protein uL3 from Borrelia duttonii (strain Ly).